The sequence spans 892 residues: Alanine--tRNA ligase (892 aa).

His-596, His-600, Cys-700, and His-704 together coordinate Zn(2+).

Belongs to the class-II aminoacyl-tRNA synthetase family. Zn(2+) serves as cofactor.

It is found in the cytoplasm. The catalysed reaction is tRNA(Ala) + L-alanine + ATP = L-alanyl-tRNA(Ala) + AMP + diphosphate. Catalyzes the attachment of alanine to tRNA(Ala) in a two-step reaction: alanine is first activated by ATP to form Ala-AMP and then transferred to the acceptor end of tRNA(Ala). Also edits incorrectly charged Ser-tRNA(Ala) and Gly-tRNA(Ala) via its editing domain. The protein is Alanine--tRNA ligase of Methanococcus maripaludis (strain C6 / ATCC BAA-1332).